The following is a 388-amino-acid chain: Succinate--CoA ligase [ADP-forming] subunit beta (388 aa).

Positions 9 to 244 (KSLFAEYGLP…PSQDDAREAH (236 aa)) constitute an ATP-grasp domain. ATP contacts are provided by residues K46, 53 to 55 (GRG), E99, T102, and E107. Mg(2+) is bound by residues N199 and D213. Substrate is bound by residues N264 and 321 to 323 (GIV).

This sequence belongs to the succinate/malate CoA ligase beta subunit family. As to quaternary structure, heterotetramer of two alpha and two beta subunits. The cofactor is Mg(2+).

It catalyses the reaction succinate + ATP + CoA = succinyl-CoA + ADP + phosphate. The catalysed reaction is GTP + succinate + CoA = succinyl-CoA + GDP + phosphate. The protein operates within carbohydrate metabolism; tricarboxylic acid cycle; succinate from succinyl-CoA (ligase route): step 1/1. Succinyl-CoA synthetase functions in the citric acid cycle (TCA), coupling the hydrolysis of succinyl-CoA to the synthesis of either ATP or GTP and thus represents the only step of substrate-level phosphorylation in the TCA. The beta subunit provides nucleotide specificity of the enzyme and binds the substrate succinate, while the binding sites for coenzyme A and phosphate are found in the alpha subunit. The protein is Succinate--CoA ligase [ADP-forming] subunit beta of Shewanella putrefaciens (strain CN-32 / ATCC BAA-453).